A 279-amino-acid polypeptide reads, in one-letter code: NAD kinase (279 aa).

The active-site Proton acceptor is the Asp-57. Residues 57–58, 133–134, Arg-159, Asp-161, and 172–177 contribute to the NAD(+) site; these read DG, NE, and TAYNKS.

This sequence belongs to the NAD kinase family. It depends on a divalent metal cation as a cofactor.

Its subcellular location is the cytoplasm. The enzyme catalyses NAD(+) + ATP = ADP + NADP(+) + H(+). Functionally, involved in the regulation of the intracellular balance of NAD and NADP, and is a key enzyme in the biosynthesis of NADP. Catalyzes specifically the phosphorylation on 2'-hydroxyl of the adenosine moiety of NAD to yield NADP. This chain is NAD kinase, found in Streptococcus pyogenes serotype M12 (strain MGAS2096).